The chain runs to 437 residues: Adenosylmethionine-8-amino-7-oxononanoate aminotransferase (437 aa).

Trp64 is a binding site for substrate. 124–125 contributes to the pyridoxal 5'-phosphate binding site; that stretch reads GS. Residue Tyr157 participates in substrate binding. Pyridoxal 5'-phosphate is bound at residue Asp254. Residues Lys283 and Gly316 each coordinate substrate. The residue at position 283 (Lys283) is an N6-(pyridoxal phosphate)lysine. 317-318 provides a ligand contact to pyridoxal 5'-phosphate; it reads PT. Substrate is bound at residue Arg400.

The protein belongs to the class-III pyridoxal-phosphate-dependent aminotransferase family. BioA subfamily. As to quaternary structure, homodimer. The cofactor is pyridoxal 5'-phosphate.

It is found in the cytoplasm. The enzyme catalyses (8S)-8-amino-7-oxononanoate + S-adenosyl-L-methionine = S-adenosyl-4-methylsulfanyl-2-oxobutanoate + (7R,8S)-7,8-diammoniononanoate. Its pathway is cofactor biosynthesis; biotin biosynthesis; 7,8-diaminononanoate from 8-amino-7-oxononanoate (SAM route): step 1/1. Functionally, catalyzes the transfer of the alpha-amino group from S-adenosyl-L-methionine (SAM) to 7-keto-8-aminopelargonic acid (KAPA) to form 7,8-diaminopelargonic acid (DAPA). It is the only aminotransferase known to utilize SAM as an amino donor. The polypeptide is Adenosylmethionine-8-amino-7-oxononanoate aminotransferase (bioA) (Mycobacterium tuberculosis (strain CDC 1551 / Oshkosh)).